The chain runs to 450 residues: tRNA modification GTPase MnmE (450 aa).

Positions 23, 79, and 118 each coordinate (6S)-5-formyl-5,6,7,8-tetrahydrofolate. One can recognise a TrmE-type G domain in the interval 214-374; that stretch reads GITLILVGKP…LKEHILNKVG (161 aa). N224 serves as a coordination point for K(+). GTP contacts are provided by residues 224–229, 243–249, and 268–271; these read NAGKSS, TSIAGTT, and DTAG. Residue S228 coordinates Mg(2+). Positions 243, 245, and 248 each coordinate K(+). Position 249 (T249) interacts with Mg(2+). K450 lines the (6S)-5-formyl-5,6,7,8-tetrahydrofolate pocket.

The protein belongs to the TRAFAC class TrmE-Era-EngA-EngB-Septin-like GTPase superfamily. TrmE GTPase family. In terms of assembly, homodimer. Heterotetramer of two MnmE and two MnmG subunits. K(+) serves as cofactor.

It is found in the cytoplasm. Functionally, exhibits a very high intrinsic GTPase hydrolysis rate. Involved in the addition of a carboxymethylaminomethyl (cmnm) group at the wobble position (U34) of certain tRNAs, forming tRNA-cmnm(5)s(2)U34. The chain is tRNA modification GTPase MnmE from Francisella tularensis subsp. novicida (strain U112).